Here is a 174-residue protein sequence, read N- to C-terminus: Crossover junction endodeoxyribonuclease RuvC (174 aa).

Residues Asp-8, Glu-68, and Asp-140 contribute to the active site. Mg(2+) contacts are provided by Asp-8, Glu-68, and Asp-140.

Belongs to the RuvC family. In terms of assembly, homodimer which binds Holliday junction (HJ) DNA. The HJ becomes 2-fold symmetrical on binding to RuvC with unstacked arms; it has a different conformation from HJ DNA in complex with RuvA. In the full resolvosome a probable DNA-RuvA(4)-RuvB(12)-RuvC(2) complex forms which resolves the HJ. The cofactor is Mg(2+).

Its subcellular location is the cytoplasm. The enzyme catalyses Endonucleolytic cleavage at a junction such as a reciprocal single-stranded crossover between two homologous DNA duplexes (Holliday junction).. The RuvA-RuvB-RuvC complex processes Holliday junction (HJ) DNA during genetic recombination and DNA repair. Endonuclease that resolves HJ intermediates. Cleaves cruciform DNA by making single-stranded nicks across the HJ at symmetrical positions within the homologous arms, yielding a 5'-phosphate and a 3'-hydroxyl group; requires a central core of homology in the junction. The consensus cleavage sequence is 5'-(A/T)TT(C/G)-3'. Cleavage occurs on the 3'-side of the TT dinucleotide at the point of strand exchange. HJ branch migration catalyzed by RuvA-RuvB allows RuvC to scan DNA until it finds its consensus sequence, where it cleaves and resolves the cruciform DNA. The chain is Crossover junction endodeoxyribonuclease RuvC from Legionella pneumophila (strain Lens).